Reading from the N-terminus, the 125-residue chain is Small ribosomal subunit protein eS8 (125 aa).

The tract at residues 1 to 30 is disordered; it reads MTIFQGRATRKPSGGKLRPNHSKRRYELGR.

The protein belongs to the eukaryotic ribosomal protein eS8 family. As to quaternary structure, part of the 30S ribosomal subunit.

The sequence is that of Small ribosomal subunit protein eS8 from Picrophilus torridus (strain ATCC 700027 / DSM 9790 / JCM 10055 / NBRC 100828 / KAW 2/3).